The chain runs to 879 residues: DNA methyltransferase A (879 aa).

This sequence belongs to the methyltransferase superfamily.

It catalyses the reaction a 2'-deoxyadenosine in DNA + S-adenosyl-L-methionine = an N(6)-methyl-2'-deoxyadenosine in DNA + S-adenosyl-L-homocysteine + H(+). Functionally, recognizes the double-stranded sequence 5'-GACGAG-3' and methylates A-5, yielding m6A. m6A methylation functions as a transcriptional modifier, promoting transcription of a number of genes (at least scpA, hbs, rnhC, yumC and zapA). One studied mechanism is via transcriptional repressor ScoC (also called hpr) which binds to non-methylated scpA promoter; when the m6A target is methylated ScoC no longer binds and scpA transcription is up-regulated. Other mechanisms for gene expression regulation probably exist. Binds DNA with and without the target sequence. Although it resembles a restriction-modification system, it does not have detectable endonuclease activity under tested conditions. A gamma subtype methylase. The polypeptide is DNA methyltransferase A (Bacillus subtilis (strain 168)).